We begin with the raw amino-acid sequence, 546 residues long: MFTPTTNNAIGGATAATGAFAFGARPATTTAPPPSFGAATSTPTFGAAPATTSLFAAPAATPAFGAPAATPAFGAPASTPGFGATSTAAPAFGTAAATPAFGIPAATSAFGAPAATPAFGAAAATPAFGAPAATPAFGAPAATSAFGAPAATTAFGAPASTQASAFGAPAPAVGTVAPTFSFATPATSAPTTAPPAFGFGTTATTAAAAMPASLSSGIGSFSFPKPQATTAASLNFNTTTTTATAQPFNTGLKLGTTNATTTLGGGGIFSKPAGQAAAPAASTFVGLGGIDVTATQPKLGDNKQDGIKIKETQVPDEIIKTVDGLKAYIKQQKTISSDIGRTSTSKFTNVSHEITNLKWALQNMATLVEGSNQQIRLMRQETVKAIQSLEMAQRTQDTPAGLQFENNAPFQYFQCLVAKYEQDLIAFRQQIALTERHMHAISNPQSISPDDLKRGFRQLNESFISLAGRLHEVHQRVEEHKEHYLNLRRYRLRDTTNVFERIDNPPLPTVEPQRISSGPTPFSNISALMNKSYAAAASSASNATGN.

17 repeat units span residues 22 to 23 (FG), 36 to 37 (FG), 45 to 46 (FG), 64 to 65 (FG), 73 to 74 (FG), 82 to 83 (FG), 92 to 93 (FG), 101 to 102 (FG), 110 to 111 (FG), 119 to 120 (FG), 128 to 129 (FG), 137 to 138 (FG), 146 to 147 (FG), 155 to 156 (FG), 166 to 167 (FG), 197 to 198 (FG), and 199 to 200 (FG). The interval 22 to 200 (FGARPATTTA…TTAPPAFGFG (179 aa)) is 17 X 2 AA repeats of F-G.

The protein belongs to the NUP58 family. In terms of assembly, component of the nuclear pore complex. Interacts with Nup54. Interacts (via C-terminus) with fs(1)Yb; this interaction occurs in a RNA-independent manner. Interacts with sbr/nxf1. Interacts with Nxt1. O-glycosylated; contains O-GlcNAc. O-GlcNAcylation increases with increasing ambient temperature.

The protein resides in the nucleus. It is found in the nuclear pore complex. In terms of biological role, component of the nuclear pore complex, a complex required for the trafficking across the nuclear membrane. Together with Nup54, required for transposable element silencing regulation in ovarian follicle cells. By interacting with the nuclear (Nxf1/Nxt1) and cytosolic (fs(1)Yb) components of the flamenco (flam) transcripts processing pathway, enables export and subsequent piRNA production. This Drosophila melanogaster (Fruit fly) protein is Nuclear pore complex protein Nup58.